We begin with the raw amino-acid sequence, 414 residues long: Esterase FrsA (414 aa).

The protein belongs to the FrsA family.

It carries out the reaction a carboxylic ester + H2O = an alcohol + a carboxylate + H(+). In terms of biological role, catalyzes the hydrolysis of esters. This Escherichia coli O127:H6 (strain E2348/69 / EPEC) protein is Esterase FrsA.